A 619-amino-acid chain; its full sequence is CREB-regulated transcription coactivator 3 (619 aa).

Ser4 and Ser62 each carry phosphoserine. Positions 129 to 148 (SQHLDESWPRQQPPWKEEKH) are disordered. Residue Thr160 is modified to Phosphothreonine. Ser162 is subject to Phosphoserine; by SIK2. Lys232 is covalently cross-linked (Glycyl lysine isopeptide (Lys-Gly) (interchain with G-Cter in SUMO2)). Phosphoserine is present on residues Ser273, Ser329, Ser332, Ser370, Ser391, Ser396, and Ser410. The segment at 375 to 478 (STTNLSGPSR…TQQPQAAPSL (104 aa)) is disordered. The required for interaction with PPP2CA and PPP2R1A stretch occupies residues 380-401 (SGPSRRRQPPVSPLTLSPGPEA). 2 stretches are compositionally biased toward polar residues: residues 405 to 415 (FSRQLSATSPL) and 422 to 431 (QMVTSEQSPL). At Ser443 the chain carries Phosphoserine. Pro residues predominate over residues 443–454 (SPPPPYPTPQEL). A compositionally biased stretch (low complexity) spans 455-478 (PQPLLQQPHAQEPPTQQPQAAPSL).

The protein belongs to the TORC family. Binding, as a tetramer, through its N-terminal region, with the bZIP domain of CREB1 enhances recruitment of TAF4 to the promoter. 'Arg-314' in the bZIP domain of CREB1 is essential for this interaction. Interacts (when phosphorylated at Ser-162 and Se-273) with 14-3-3 proteins. Interacts with YWHAE. Interacts (when phosphorylated at Ser-391) with phosphatase PP2A catalytic subunit PPP2CA and regulatory subunits PPP2R1A and PPP2R2A. In terms of processing, phosphorylation/dephosphorylation states of Ser-273 are required for regulating transduction of CREB activity. CRTCs/TORCs are inactive when phosphorylated, and active when dephosphorylated at this site. May be phosphorylated at Ser-391 by MAPK3/ERK1 and/or MAPK1/ERK2 or by some cyclin-dependent kinases such as CDK1,CDK2 or CDK5. Following adenylyl cyclase activation, dephosphorylated at Ser-162 and Ser-273 resulting in its dissociation from 14-3-3 proteins probably promoting CRTC3 translocation into the nucleus. In terms of tissue distribution, expressed in brown adipose tissues.

The protein localises to the nucleus. It is found in the cytoplasm. Functionally, transcriptional coactivator for CREB1 which activates transcription through both consensus and variant cAMP response element (CRE) sites. Acts as a coactivator, in the SIK/TORC signaling pathway, being active when dephosphorylated. Acts independently of CREB1 'Ser-133' phosphorylation. Enhances the interaction of CREB1 with TAF4. Regulates the expression of specific CREB-activated genes such as the steroidogenic gene, StAR. Potent coactivator of PPARGC1A and inducer of mitochondrial biogenesis in muscle cells. This chain is CREB-regulated transcription coactivator 3 (Crtc3), found in Mus musculus (Mouse).